Here is a 284-residue protein sequence, read N- to C-terminus: Acetyl-coenzyme A carboxylase carboxyl transferase subunit beta (284 aa).

One can recognise a CoA carboxyltransferase N-terminal domain in the interval 31–284; the sequence is FWTYCKGCDS…LYQILAMHKK (254 aa). The Zn(2+) site is built by C35, C38, C54, and C57. The C4-type zinc finger occupies 35–57; that stretch reads CKGCDSHVFRKDIEENSFVCPKC.

This sequence belongs to the AccD/PCCB family. Acetyl-CoA carboxylase is a heterohexamer composed of biotin carboxyl carrier protein (AccB), biotin carboxylase (AccC) and two subunits each of ACCase subunit alpha (AccA) and ACCase subunit beta (AccD). Zn(2+) is required as a cofactor.

The protein resides in the cytoplasm. The catalysed reaction is N(6)-carboxybiotinyl-L-lysyl-[protein] + acetyl-CoA = N(6)-biotinyl-L-lysyl-[protein] + malonyl-CoA. It participates in lipid metabolism; malonyl-CoA biosynthesis; malonyl-CoA from acetyl-CoA: step 1/1. Functionally, component of the acetyl coenzyme A carboxylase (ACC) complex. Biotin carboxylase (BC) catalyzes the carboxylation of biotin on its carrier protein (BCCP) and then the CO(2) group is transferred by the transcarboxylase to acetyl-CoA to form malonyl-CoA. The polypeptide is Acetyl-coenzyme A carboxylase carboxyl transferase subunit beta (Clostridioides difficile (strain 630) (Peptoclostridium difficile)).